A 510-amino-acid chain; its full sequence is Coatomer subunit delta (510 aa).

The MHD domain occupies 270-510 (MESVHMKIEE…TFLVDKYEIL (241 aa)).

Belongs to the adaptor complexes medium subunit family. Delta-COP subfamily. In terms of assembly, oligomeric complex that consists of at least the alpha, beta, beta', gamma, delta, epsilon and zeta subunits.

It localises to the cytoplasm. Its subcellular location is the golgi apparatus membrane. The protein localises to the cytoplasmic vesicle. The protein resides in the COPI-coated vesicle membrane. In terms of biological role, the coatomer is a cytosolic protein complex that binds to dilysine motifs and reversibly associates with Golgi non-clathrin-coated vesicles, which further mediate biosynthetic protein transport from the ER, via the Golgi up to the trans Golgi network. Coatomer complex is required for budding from Golgi membranes, and is essential for the retrograde Golgi-to-ER transport of dilysine-tagged proteins. In mammals, the coatomer can only be recruited by membranes associated to ADP-ribosylation factors (ARFs), which are small GTP-binding proteins; the complex also influences the Golgi structural integrity, as well as the processing, activity, and endocytic recycling of LDL receptors. The polypeptide is Coatomer subunit delta (ARCN1) (Gallus gallus (Chicken)).